A 461-amino-acid chain; its full sequence is GTPase Der (461 aa).

2 consecutive EngA-type G domains span residues 9 to 171 (KTIA…DLNQ) and 200 to 371 (IQVG…ECFS). Residues 15-22 (GQPNVGKS), 62-66 (DTGGM), 123-126 (NKID), 206-213 (GRVNVGKS), 253-257 (DTAGI), and 317-320 (NKWD) contribute to the GTP site. A KH-like domain is found at 372 to 456 (KRIPTSLLNS…PLILNAKDKK (85 aa)).

Belongs to the TRAFAC class TrmE-Era-EngA-EngB-Septin-like GTPase superfamily. EngA (Der) GTPase family. As to quaternary structure, associates with the 50S ribosomal subunit.

Functionally, GTPase that plays an essential role in the late steps of ribosome biogenesis. In Helicobacter pylori (strain Shi470), this protein is GTPase Der.